The chain runs to 652 residues: ATP-binding cassette sub-family G member 5 (652 aa).

A disordered region spans residues 1–30; sequence MSELPFLSPEGARGPHNNRGSQSSLEEGSV. Topologically, residues 1–384 are cytoplasmic; the sequence is MSELPFLSPE…RVTRNLMRNK (384 aa). The span at 18-30 shows a compositional bias: polar residues; that stretch reads NRGSQSSLEEGSV. The ABC transporter domain occupies 39-294; it reads LGVLNVSFSV…FNNCGYPCPE (256 aa). 87–94 provides a ligand contact to ATP; the sequence is GSSGSGKT. A helical membrane pass occupies residues 385-405; the sequence is QVVIMRLVQNLIMGLFLIFYL. In terms of domain architecture, ABC transmembrane type-2 spans 389 to 646; it reads MRLVQNLIMG…ILGMVVFKVR (258 aa). Over 406-422 the chain is Extracellular; it reads LRVQNNMLKGAVQDRVG. Residues 423-443 traverse the membrane as a helical segment; that stretch reads LLYQLVGATPYTGMLNAVNLF. At 444–468 the chain is on the cytoplasmic side; sequence PMLRAVSDQESQDGLYQKWQMLLAY. Residues 469 to 490 form a helical membrane-spanning segment; that stretch reads VLHALPFSIVATVIFSSVCYWT. The Extracellular segment spans residues 491–501; it reads LGLYPEVARFG. The helical transmembrane segment at 502-522 threads the bilayer; the sequence is YFSAALLAPHLIGEFLTLVLL. Residues 523-529 lie on the Cytoplasmic side of the membrane; the sequence is GMVQNPN. Residues 530–550 form a helical membrane-spanning segment; the sequence is IVNSIVALLSISGLLIGSGFI. Over 551-624 the chain is Extracellular; that stretch reads RNIEEMPIPL…PGATSRFTTN (74 aa). Residues Asn-585 and Asn-592 are each glycosylated (N-linked (GlcNAc...) asparagine). Residues 625–645 traverse the membrane as a helical segment; the sequence is FLILYSFIPTLVILGMVVFKV. Residues 646–652 are Cytoplasmic-facing; that stretch reads RDYLISR.

This sequence belongs to the ABC transporter superfamily. ABCG family. Eye pigment precursor importer (TC 3.A.1.204) subfamily. As to quaternary structure, heterodimer with ABCG8. Mg(2+) is required as a cofactor. In terms of processing, N-glycosylated. N-glycosylation is important for efficient export out of the endoplasmic reticulum. As to expression, detected in liver (at protein level). Expressed only in liver and intestine.

It is found in the cell membrane. The protein localises to the apical cell membrane. The catalysed reaction is cholesterol(in) + ATP + H2O = cholesterol(out) + ADP + phosphate + H(+). It catalyses the reaction sitosterol(in) + ATP + H2O = sitosterol(out) + ADP + phosphate + H(+). Its function is as follows. ABCG5 and ABCG8 form an obligate heterodimer that mediates Mg(2+)- and ATP-dependent sterol transport across the cell membrane. Plays an essential role in the selective transport of dietary plant sterols and cholesterol in and out of the enterocytes and in the selective sterol excretion by the liver into bile. Required for normal sterol homeostasis. The heterodimer with ABCG8 has ATPase activity. This Rattus norvegicus (Rat) protein is ATP-binding cassette sub-family G member 5.